The chain runs to 413 residues: 26S proteasome regulatory subunit 6B homolog (413 aa).

Residues 1-30 form a disordered region; sequence MATAMVLDPKPAEKLPATRPETSITDVPSD. The stretch at 32–80 forms a coiled coil; it reads EDDLYARLKSLQRQLEFIEIQEEYVKDELKNLRREHLRAQEEVKRIQSV. 201 to 208 lines the ATP pocket; it reads GPPGTGKT.

This sequence belongs to the AAA ATPase family.

Its subcellular location is the cytoplasm. It localises to the nucleus. In terms of biological role, the 26S proteasome is involved in the ATP-dependent degradation of ubiquitinated proteins. The regulatory (or ATPase) complex confers ATP dependency and substrate specificity to the 26S complex. In Solanum tuberosum (Potato), this protein is 26S proteasome regulatory subunit 6B homolog.